Here is a 272-residue protein sequence, read N- to C-terminus: HMP-PP phosphatase (272 aa).

Catalysis depends on Asp8, which acts as the Nucleophile. The Mg(2+) site is built by Asp8, Asp10, and Asp212.

The protein belongs to the HAD-like hydrolase superfamily. Cof family. Mg(2+) is required as a cofactor.

It catalyses the reaction 4-amino-2-methyl-5-(diphosphooxymethyl)pyrimidine + H2O = 4-amino-2-methyl-5-(phosphooxymethyl)pyrimidine + phosphate + H(+). Functionally, catalyzes the hydrolysis of 4-amino-2-methyl-5-hydroxymethylpyrimidine pyrophosphate (HMP-PP) to 4-amino-2-methyl-5-hydroxymethylpyrimidine phosphate (HMP-P). The chain is HMP-PP phosphatase from Escherichia coli (strain K12 / MC4100 / BW2952).